The sequence spans 169 residues: Peptide methionine sulfoxide reductase MsrA (169 aa).

Cys10 is an active-site residue.

This sequence belongs to the MsrA Met sulfoxide reductase family.

It carries out the reaction L-methionyl-[protein] + [thioredoxin]-disulfide + H2O = L-methionyl-(S)-S-oxide-[protein] + [thioredoxin]-dithiol. The catalysed reaction is [thioredoxin]-disulfide + L-methionine + H2O = L-methionine (S)-S-oxide + [thioredoxin]-dithiol. Has an important function as a repair enzyme for proteins that have been inactivated by oxidation. Catalyzes the reversible oxidation-reduction of methionine sulfoxide in proteins to methionine. The protein is Peptide methionine sulfoxide reductase MsrA of Streptococcus pyogenes serotype M12 (strain MGAS2096).